The chain runs to 386 residues: Antilisterial bacteriocin subtilosin biosynthesis protein AlbE (386 aa).

In terms of biological role, involved in the production of the bacteriocin subtilosin. This Bacillus subtilis (strain 168) protein is Antilisterial bacteriocin subtilosin biosynthesis protein AlbE (albE).